The following is a 1040-amino-acid chain: Tudor domain-containing protein 5 (1040 aa).

HTH OST-type domains lie at 7-80, 122-197, and 291-365; these read IQDC…KAIP, VPPI…LKKS, and VDPE…FDAD. One can recognise a Tudor domain in the interval 533–592; that stretch reads FIQPGHLCCVKISEDKWWYRVIIHRILGKKEVEVFYPDFGNIGTVQKSSLRFLKCCYTKL. S809 carries the post-translational modification Phosphoserine. Disordered stretches follow at residues 857 to 891 and 912 to 975; these read DVKGGIHTPEGPIAQEKNTSTTRIQQQPDLQYPLD and AERS…AKDK. Polar residues-rich tracts occupy residues 872 to 891 and 912 to 924; these read EKNTSTTRIQQQPDLQYPLD and AERSQSEPASIQT. Position 943 is a phosphoserine (S943). A compositionally biased stretch (polar residues) spans 946-956; that stretch reads NHSGSVESSPG. Over residues 958–975 the composition is skewed to basic and acidic residues; that stretch reads LKKEDVSNSRAEATAKDK.

The protein belongs to the TDRD5 family. As to expression, gonad-specific. Mainly expressed in testis. Present at low level in ovary (at protein level).

The protein localises to the cytoplasm. Its function is as follows. Required during spermiogenesis to participate in the repression transposable elements and prevent their mobilization, which is essential for the germline integrity. Probably acts via the piRNA metabolic process, which mediates the repression of transposable elements during meiosis by forming complexes composed of piRNAs and Piwi proteins and govern the methylation and subsequent repression of transposons. Required for chromatoid body (CB) assembly. In Mus musculus (Mouse), this protein is Tudor domain-containing protein 5 (Tdrd5).